A 207-amino-acid chain; its full sequence is Outer-membrane lipoprotein carrier protein (207 aa).

The first 22 residues, 1 to 22 (MKLSEKFCVFLFFLLFTSTTHA), serve as a signal peptide directing secretion.

Belongs to the LolA family. Monomer.

The protein localises to the periplasm. In terms of biological role, participates in the translocation of lipoproteins from the inner membrane to the outer membrane. Only forms a complex with a lipoprotein if the residue after the N-terminal Cys is not an aspartate (The Asp acts as a targeting signal to indicate that the lipoprotein should stay in the inner membrane). This is Outer-membrane lipoprotein carrier protein from Nitrosospira multiformis (strain ATCC 25196 / NCIMB 11849 / C 71).